Here is a 642-residue protein sequence, read N- to C-terminus: uncharacterized protein (642 aa).

Residues Glu15 and Asp118 each coordinate Mg(2+). The region spanning 29 to 149 (VCVDTCVVID…YNLAKAQGIE (121 aa)) is the PINc domain. The KH domain occupies 510 to 578 (DNSIDLIVPE…ELESTRIYET (69 aa)).

This sequence in the N-terminal section; belongs to the PINc/VapC protein family. It depends on Mg(2+) as a cofactor.

This is an uncharacterized protein from Methanocaldococcus jannaschii (strain ATCC 43067 / DSM 2661 / JAL-1 / JCM 10045 / NBRC 100440) (Methanococcus jannaschii).